The primary structure comprises 227 residues: Small ribosomal subunit protein uS3 (227 aa).

Residues 39–107 enclose the KH type-2 domain; sequence VREFLDKRLV…PVHINIEEVR (69 aa).

The protein belongs to the universal ribosomal protein uS3 family. In terms of assembly, part of the 30S ribosomal subunit. Forms a tight complex with proteins S10 and S14.

Binds the lower part of the 30S subunit head. Binds mRNA in the 70S ribosome, positioning it for translation. This Marinobacter nauticus (strain ATCC 700491 / DSM 11845 / VT8) (Marinobacter aquaeolei) protein is Small ribosomal subunit protein uS3.